A 188-amino-acid chain; its full sequence is Tetratricopeptide repeat protein 36 (188 aa).

TPR repeat units follow at residues 50-83 (SKAL…LPER), 85-117 (SAYN…SGGR), and 122-155 (RQGF…GSPF).

It belongs to the TTC36 family.

The protein is Tetratricopeptide repeat protein 36 (TTC36) of Bos taurus (Bovine).